Here is a 78-residue protein sequence, read N- to C-terminus: UPF0270 protein IL0325 (78 aa).

This sequence belongs to the UPF0270 family.

The polypeptide is UPF0270 protein IL0325 (Idiomarina loihiensis (strain ATCC BAA-735 / DSM 15497 / L2-TR)).